The chain runs to 375 residues: Tyrosine--tRNA ligase (375 aa).

L-tyrosine-binding residues include Tyr37, Tyr168, Gln172, Asp175, and Gln190. The 'KMSKS' region motif lies at 251-255 (KMSKS). Lys254 lines the ATP pocket.

Belongs to the class-I aminoacyl-tRNA synthetase family. TyrS type 4 subfamily. As to quaternary structure, homodimer.

It localises to the cytoplasm. It catalyses the reaction tRNA(Tyr) + L-tyrosine + ATP = L-tyrosyl-tRNA(Tyr) + AMP + diphosphate + H(+). Catalyzes the attachment of tyrosine to tRNA(Tyr) in a two-step reaction: tyrosine is first activated by ATP to form Tyr-AMP and then transferred to the acceptor end of tRNA(Tyr). The polypeptide is Tyrosine--tRNA ligase (Thermococcus gammatolerans (strain DSM 15229 / JCM 11827 / EJ3)).